We begin with the raw amino-acid sequence, 403 residues long: Alkaline protease 1 (403 aa).

Residues 1–21 form the signal peptide; sequence MQSIKRTLLLLGAVLPAVLAG. Residues 22–121 constitute a propeptide that is removed on maturation; that stretch reads PIFPHRRAPT…VEEDQVWHLF (100 aa). The 85-residue stretch at 36 to 120 folds into the Inhibitor I9 domain; that stretch reads KYIVTFKSDV…AVEEDQVWHL (85 aa). The Peptidase S8 domain maps to 130 to 403; it reads PWGLGSISHK…PNLLAYNGNA (274 aa). Catalysis depends on charge relay system residues Asp162 and His193. 2 N-linked (GlcNAc...) asparagine glycosylation sites follow: Asn253 and Asn309. The active-site Charge relay system is Ser349.

Belongs to the peptidase S8 family.

The protein localises to the secreted. It carries out the reaction Hydrolysis of proteins with broad specificity, and of Bz-Arg-OEt &gt; Ac-Tyr-OEt. Does not hydrolyze peptide amides.. In terms of biological role, secreted alkaline protease that allows assimilation of proteinaceous substrates. The polypeptide is Alkaline protease 1 (alp1) (Aspergillus flavus).